Consider the following 127-residue polypeptide: Small ribosomal subunit protein eS8 (127 aa).

Residues 1–25 (MTIFQGKSGKKPTGGNLKQAKKKRR) form a disordered region.

It belongs to the eukaryotic ribosomal protein eS8 family. In terms of assembly, part of the 30S ribosomal subunit.

In Thermoplasma volcanium (strain ATCC 51530 / DSM 4299 / JCM 9571 / NBRC 15438 / GSS1), this protein is Small ribosomal subunit protein eS8.